Reading from the N-terminus, the 85-residue chain is ATP synthase subunit c (85 aa).

2 helical membrane-spanning segments follow: residues 10-30 (IAVA…FAVL) and 53-73 (FIIA…ALLF).

The protein belongs to the ATPase C chain family. F-type ATPases have 2 components, F(1) - the catalytic core - and F(0) - the membrane proton channel. F(1) has five subunits: alpha(3), beta(3), gamma(1), delta(1), epsilon(1). F(0) has three main subunits: a(1), b(2) and c(10-14). The alpha and beta chains form an alternating ring which encloses part of the gamma chain. F(1) is attached to F(0) by a central stalk formed by the gamma and epsilon chains, while a peripheral stalk is formed by the delta and b chains.

The protein localises to the cell inner membrane. F(1)F(0) ATP synthase produces ATP from ADP in the presence of a proton or sodium gradient. F-type ATPases consist of two structural domains, F(1) containing the extramembraneous catalytic core and F(0) containing the membrane proton channel, linked together by a central stalk and a peripheral stalk. During catalysis, ATP synthesis in the catalytic domain of F(1) is coupled via a rotary mechanism of the central stalk subunits to proton translocation. Functionally, key component of the F(0) channel; it plays a direct role in translocation across the membrane. A homomeric c-ring of between 10-14 subunits forms the central stalk rotor element with the F(1) delta and epsilon subunits. This is ATP synthase subunit c from Vibrio cholerae serotype O1 (strain ATCC 39315 / El Tor Inaba N16961).